The chain runs to 506 residues: UDP-N-acetylmuramoyl-L-alanyl-D-glutamate--2,6-diaminopimelate ligase (506 aa).

Residue serine 42 participates in UDP-N-acetyl-alpha-D-muramoyl-L-alanyl-D-glutamate binding. An ATP-binding site is contributed by 125–131; sequence GTSGKTT. UDP-N-acetyl-alpha-D-muramoyl-L-alanyl-D-glutamate contacts are provided by residues 166–167, serine 193, and arginine 201; that span reads TT. The residue at position 233 (lysine 233) is an N6-carboxylysine. Meso-2,6-diaminopimelate contacts are provided by residues arginine 395, 419–422, glycine 475, and glutamate 479; that span reads DNPR. The Meso-diaminopimelate recognition motif motif lies at 419–422; that stretch reads DNPR.

Belongs to the MurCDEF family. MurE subfamily. Requires Mg(2+) as cofactor. Carboxylation is probably crucial for Mg(2+) binding and, consequently, for the gamma-phosphate positioning of ATP.

It localises to the cytoplasm. The catalysed reaction is UDP-N-acetyl-alpha-D-muramoyl-L-alanyl-D-glutamate + meso-2,6-diaminopimelate + ATP = UDP-N-acetyl-alpha-D-muramoyl-L-alanyl-gamma-D-glutamyl-meso-2,6-diaminopimelate + ADP + phosphate + H(+). Its pathway is cell wall biogenesis; peptidoglycan biosynthesis. In terms of biological role, catalyzes the addition of meso-diaminopimelic acid to the nucleotide precursor UDP-N-acetylmuramoyl-L-alanyl-D-glutamate (UMAG) in the biosynthesis of bacterial cell-wall peptidoglycan. In Streptomyces avermitilis (strain ATCC 31267 / DSM 46492 / JCM 5070 / NBRC 14893 / NCIMB 12804 / NRRL 8165 / MA-4680), this protein is UDP-N-acetylmuramoyl-L-alanyl-D-glutamate--2,6-diaminopimelate ligase.